The chain runs to 345 residues: DNA-directed RNA polymerase subunit alpha (345 aa).

Positions 1–241 are alpha N-terminal domain (alpha-NTD); sequence MLRDTHLALQ…DQLGMFINFE (241 aa). An alpha C-terminal domain (alpha-CTD) region spans residues 257-345; the sequence is FNPNLLRKVD…ELVKRSDNPF (89 aa).

Belongs to the RNA polymerase alpha chain family. In terms of assembly, homodimer. The RNAP catalytic core consists of 2 alpha, 1 beta, 1 beta' and 1 omega subunit. When a sigma factor is associated with the core the holoenzyme is formed, which can initiate transcription.

It carries out the reaction RNA(n) + a ribonucleoside 5'-triphosphate = RNA(n+1) + diphosphate. DNA-dependent RNA polymerase catalyzes the transcription of DNA into RNA using the four ribonucleoside triphosphates as substrates. The chain is DNA-directed RNA polymerase subunit alpha from Acidiphilium cryptum (strain JF-5).